The following is a 712-amino-acid chain: Probable GTP diphosphokinase RSH3, chloroplastic (712 aa).

The N-terminal 64 residues, 1–64 (MVVATTIALY…LLFSGASVKS (64 aa)), are a transit peptide targeting the chloroplast. Low complexity predominate over residues 65–74 (SSSSSSSHPS). The disordered stretch occupies residues 65-84 (SSSSSSSHPSVGEELASIRH). The HD domain occupies 237–338 (YLQHCVETAM…IKLADRLHNM (102 aa)).

This sequence belongs to the RelA/SpoT family.

It is found in the plastid. It localises to the chloroplast. The enzyme catalyses GTP + ATP = guanosine 3'-diphosphate 5'-triphosphate + AMP. Its function is as follows. Probable ppGpp (guanosine 3'-diphosphate 5'-diphosphate) synthetase that may be involved in a rapid plant ppGpp-mediated response to pathogens and other stresses. The polypeptide is Probable GTP diphosphokinase RSH3, chloroplastic (RSH3) (Arabidopsis thaliana (Mouse-ear cress)).